The chain runs to 204 residues: High frequency lysogenization protein HflD homolog (204 aa).

Belongs to the HflD family.

Its subcellular location is the cytoplasm. It localises to the cell inner membrane. The polypeptide is High frequency lysogenization protein HflD homolog (Xanthomonas euvesicatoria pv. vesicatoria (strain 85-10) (Xanthomonas campestris pv. vesicatoria)).